The primary structure comprises 109 residues: Ribulose bisphosphate carboxylase small subunit (109 aa).

This sequence belongs to the RuBisCO small chain family. In terms of assembly, heterohexadecamer of 8 large and 8 small subunits.

Its subcellular location is the carboxysome. In terms of biological role, ruBisCO catalyzes two reactions: the carboxylation of D-ribulose 1,5-bisphosphate, the primary event in carbon dioxide fixation, as well as the oxidative fragmentation of the pentose substrate in the photorespiration process. Both reactions occur simultaneously and in competition at the same active site. Although the small subunit is not catalytic it is essential for maximal activity. The chain is Ribulose bisphosphate carboxylase small subunit from Prochlorothrix hollandica.